Reading from the N-terminus, the 350-residue chain is Biotin synthase (350 aa).

Positions 41-268 (NEVQISRLLS…KSRVRLSAGR (228 aa)) constitute a Radical SAM core domain. [4Fe-4S] cluster is bound by residues C56, C60, and C63. [2Fe-2S] cluster-binding residues include C100, C131, C191, and R263.

The protein belongs to the radical SAM superfamily. Biotin synthase family. Homodimer. [4Fe-4S] cluster is required as a cofactor. The cofactor is [2Fe-2S] cluster.

It catalyses the reaction (4R,5S)-dethiobiotin + (sulfur carrier)-SH + 2 reduced [2Fe-2S]-[ferredoxin] + 2 S-adenosyl-L-methionine = (sulfur carrier)-H + biotin + 2 5'-deoxyadenosine + 2 L-methionine + 2 oxidized [2Fe-2S]-[ferredoxin]. It participates in cofactor biosynthesis; biotin biosynthesis; biotin from 7,8-diaminononanoate: step 2/2. In terms of biological role, catalyzes the conversion of dethiobiotin (DTB) to biotin by the insertion of a sulfur atom into dethiobiotin via a radical-based mechanism. The protein is Biotin synthase of Shewanella halifaxensis (strain HAW-EB4).